The sequence spans 302 residues: Acetyl-coenzyme A carboxylase carboxyl transferase subunit beta (302 aa).

The CoA carboxyltransferase N-terminal domain maps to Val25–Ala294. 4 residues coordinate Zn(2+): Cys29, Cys32, Cys48, and Cys51. The C4-type zinc-finger motif lies at Cys29–Cys51.

The protein belongs to the AccD/PCCB family. Acetyl-CoA carboxylase is a heterohexamer composed of biotin carboxyl carrier protein (AccB), biotin carboxylase (AccC) and two subunits each of ACCase subunit alpha (AccA) and ACCase subunit beta (AccD). Zn(2+) is required as a cofactor.

The protein localises to the cytoplasm. The catalysed reaction is N(6)-carboxybiotinyl-L-lysyl-[protein] + acetyl-CoA = N(6)-biotinyl-L-lysyl-[protein] + malonyl-CoA. Its pathway is lipid metabolism; malonyl-CoA biosynthesis; malonyl-CoA from acetyl-CoA: step 1/1. In terms of biological role, component of the acetyl coenzyme A carboxylase (ACC) complex. Biotin carboxylase (BC) catalyzes the carboxylation of biotin on its carrier protein (BCCP) and then the CO(2) group is transferred by the transcarboxylase to acetyl-CoA to form malonyl-CoA. The polypeptide is Acetyl-coenzyme A carboxylase carboxyl transferase subunit beta (Erwinia tasmaniensis (strain DSM 17950 / CFBP 7177 / CIP 109463 / NCPPB 4357 / Et1/99)).